We begin with the raw amino-acid sequence, 179 residues long: Methylated-DNA--protein-cysteine methyltransferase, inducible (179 aa).

Cys-141 acts as the Nucleophile; methyl group acceptor in catalysis.

This sequence belongs to the MGMT family.

It catalyses the reaction a 6-O-methyl-2'-deoxyguanosine in DNA + L-cysteinyl-[protein] = S-methyl-L-cysteinyl-[protein] + a 2'-deoxyguanosine in DNA. The enzyme catalyses a 4-O-methyl-thymidine in DNA + L-cysteinyl-[protein] = a thymidine in DNA + S-methyl-L-cysteinyl-[protein]. Involved in the cellular defense against the biological effects of O6-methylguanine (O6-MeG) and O4-methylthymine (O4-MeT) in DNA. Repairs the methylated nucleobase in DNA by stoichiometrically transferring the methyl group to a cysteine residue in the enzyme. This is a suicide reaction: the enzyme is irreversibly inactivated. In Bacillus subtilis (strain 168), this protein is Methylated-DNA--protein-cysteine methyltransferase, inducible (adaB).